We begin with the raw amino-acid sequence, 435 residues long: Eukaryotic translation initiation factor 3 subunit E (435 aa).

The PCI domain maps to 219-392 (FFNHPKGRDL…GHVVMGTQPL (174 aa)).

This sequence belongs to the eIF-3 subunit E family. In terms of assembly, component of the eukaryotic translation initiation factor 3 (eIF-3) complex. The eIF-3 complex interacts with pix. Interacts with mxt.

It is found in the cytoplasm. In terms of biological role, component of the eukaryotic translation initiation factor 3 (eIF-3) complex, which is involved in protein synthesis of a specialized repertoire of mRNAs and, together with other initiation factors, stimulates binding of mRNA and methionyl-tRNAi to the 40S ribosome. The eIF-3 complex specifically targets and initiates translation of a subset of mRNAs involved in cell proliferation. In Drosophila erecta (Fruit fly), this protein is Eukaryotic translation initiation factor 3 subunit E (eIF3-S6).